The sequence spans 357 residues: Transcription factor unc-86 (357 aa).

The POU-IV box motif lies at 35 to 44 (RAAQVALADI). The 78-residue stretch at 155 to 232 (DMDTDPRQLE…ILHSWLEKAE (78 aa)) folds into the POU-specific domain. Positions 253 to 312 (KKRKRTSIAAPEKRELEQFFKQQPRPSGERIASIADRLDLKKNVVRVWFCNQRQKQKRDF) form a DNA-binding region, homeobox.

This sequence belongs to the POU transcription factor family. Class-4 subfamily. In terms of assembly, interacts with mec-3; the heterooligomer binds to the promoters of mec-3, mec-4 and mec-7. Specific to neurons and neuroblasts. Expressed in CEM head neurons and in IL2, URA, URB, URX and URY neurons. Not expressed in olfactory sensory neurons but expressed in AIZ interneurons.

The protein localises to the nucleus. In terms of biological role, transcription factor required for correct cell fate determination and differentiation in diverse neuronal cell lineages where it plays a role in specifying the fate of daughter cells during cell divisions. Involved in sensory neuron production and function. Binds both alone and with mec-3 to the mec-3 promoter to initiate and maintain mec-3 expression which is required for sensory neuron differentiation. In addition, binds both alone and with mec-3 to the promoters of mec-4 and mec-7 which act to regulate sensory neuron function. Involved in determining the identity of the serotonergic NSM neurons and the cholinergic IL2 sensory and URA motor neurons. Promotes expression of the cfi-1 transcription factor in the URA and IL2 neurons which in turn activates normal URA and IL2 gene expression. Required to determine the identity of BDU sensory neurons in concert with transcription factor unc-86, regulating expression of a number of genes, including transcription factors ceh-14 and ahr-1, neuropeptides flp-10, nlp-1 and nlp-15, and tyramine receptor-encoding ser-2. Regulates expression of a number of genes in NSM neurons including bas-1, cat-1, dop-3, mgl-3, nlp-13, scd-2 and ptps-1. In the IL2 neurons, required for expression of cho-1, gcy-19, klp-6, lag-2, unc-5 and unc-17. Promotes expression of pkd-2 in the male-specific CEM head neurons. Required for dauer-specific branching of IL2Q neurons and nictation behavior. Controls both the timing and direction of axon outgrowth in HSN neurons. Plays a role in serotonin production by regulating expression of the tryptophan hydrolase tph-1 which catalyzes serotonin synthesis, in the AIM, NSM, HSN and RIH neurons. Involved in regulation of lin-11 expression in the AIZ interneurons, the major interneurons of the olfactory pathway, and is required for odortaxis behavior. Involved in neurite pruning between AIM neurons during larval development by regulating the expression of transcription factor mbr-1. Required for correct localization of unc-40. The protein is Transcription factor unc-86 (unc-86) of Caenorhabditis elegans.